Consider the following 235-residue polypeptide: MDKIIGKQLPKKDQDNEHWVSMSDLMAGLMMVFMFISIAYMHYVRIEKEKIKEVAVAYENAQLQIYNALDIEFAKDLQDWDAEIDKQTLEVRFKSPDVLFGLGSTELKPKFKLILDDFFPRYLKVLDNYQEHITEVRIEGHTSTDWTGTTNPDIAYFNNMALSQGRTRAVLQYVYDIKNIATHQQWVKSKFAAVGYSSAHPILDKTGKEDPNRSRRVTFKVVTNAELQIRKIIQE.

The chain crosses the membrane as a helical span at residues 25-44 (LMAGLMMVFMFISIAYMHYV). In terms of domain architecture, OmpA-like spans 87–225 (QTLEVRFKSP…RVTFKVVTNA (139 aa)).

Belongs to the MotB family.

It is found in the cell inner membrane. Component of antiviral defense system Zorya type II, composed of ZorA, ZorB and ZorE. Expression of Zorya type II in E.coli (strain MG1655) confers resistance to phages SECphi7 and T7. While most T7 infected Zorya-containing cells undergo abortive infection, a minority produce viable phage progeny. These eventually accumulate to a high multiplicity of infection, leading to culture collapse by 170 minutes after initial infection. ZorA and ZorB probably assemble in the cell inner membrane and exert their effect there. The polypeptide is Zorya protein ZorB (Escherichia coli (strain ATCC 8739 / DSM 1576 / NBRC 3972 / NCIMB 8545 / WDCM 00012 / Crooks)).